The following is a 439-amino-acid chain: Xylose isomerase (439 aa).

Residues H101 and D104 contribute to the active site. E232, E268, H271, D296, D307, D309, and D339 together coordinate Mg(2+).

Belongs to the xylose isomerase family. Homotetramer. Requires Mg(2+) as cofactor.

The protein localises to the cytoplasm. It carries out the reaction alpha-D-xylose = alpha-D-xylulofuranose. The protein is Xylose isomerase of Haemophilus influenzae (strain 86-028NP).